Consider the following 162-residue polypeptide: Putative ankyrin repeat protein R664 (162 aa).

3 ANK repeats span residues 10-40 (KKLV…NVNY), 47-78 (NDTP…DVNY), and 82-111 (YHET…NPYL).

The polypeptide is Putative ankyrin repeat protein R664 (Acanthamoeba polyphaga mimivirus (APMV)).